Here is a 365-residue protein sequence, read N- to C-terminus: 3-isopropylmalate dehydrogenase (365 aa).

Position 80–91 (80–91 (GPKWGTGEVRPE)) interacts with NAD(+). Residues Arg98, Arg108, Arg137, and Asp226 each contribute to the substrate site. Residues Asp226, Asp251, and Asp255 each contribute to the Mg(2+) site. 290–301 (GSAPDLPKNKVN) provides a ligand contact to NAD(+).

This sequence belongs to the isocitrate and isopropylmalate dehydrogenases family. As to quaternary structure, homodimer. The cofactor is Mg(2+). Mn(2+) serves as cofactor.

It localises to the cytoplasm. The catalysed reaction is (2R,3S)-3-isopropylmalate + NAD(+) = 4-methyl-2-oxopentanoate + CO2 + NADH. It participates in amino-acid biosynthesis; L-leucine biosynthesis; L-leucine from 3-methyl-2-oxobutanoate: step 3/4. Catalyzes the oxidation of 3-carboxy-2-hydroxy-4-methylpentanoate (3-isopropylmalate) to 3-carboxy-4-methyl-2-oxopentanoate. The product decarboxylates to 4-methyl-2 oxopentanoate. This is 3-isopropylmalate dehydrogenase (LEU2) from Candida boidinii (Yeast).